The chain runs to 118 residues: Large ribosomal subunit protein bL20 (118 aa).

It belongs to the bacterial ribosomal protein bL20 family.

Its function is as follows. Binds directly to 23S ribosomal RNA and is necessary for the in vitro assembly process of the 50S ribosomal subunit. It is not involved in the protein synthesizing functions of that subunit. In Buchnera aphidicola subsp. Acyrthosiphon pisum (strain 5A), this protein is Large ribosomal subunit protein bL20.